We begin with the raw amino-acid sequence, 458 residues long: Argininosuccinate lyase (458 aa).

It belongs to the lyase 1 family. Argininosuccinate lyase subfamily.

The protein resides in the cytoplasm. It carries out the reaction 2-(N(omega)-L-arginino)succinate = fumarate + L-arginine. The protein operates within amino-acid biosynthesis; L-arginine biosynthesis; L-arginine from L-ornithine and carbamoyl phosphate: step 3/3. This Neisseria meningitidis serogroup A / serotype 4A (strain DSM 15465 / Z2491) protein is Argininosuccinate lyase.